The primary structure comprises 241 residues: Uridylate kinase (241 aa).

12-15 is an ATP binding site; it reads KISG. The segment at 20–25 is involved in allosteric activation by GTP; that stretch reads GDKGNG. Position 54 (Gly54) interacts with UMP. ATP-binding residues include Gly55 and Arg59. UMP contacts are provided by residues Asp74 and 135–142; that span reads TGNPYFST. The ATP site is built by Asn163, Tyr169, and Asp172.

The protein belongs to the UMP kinase family. Homohexamer.

It localises to the cytoplasm. The enzyme catalyses UMP + ATP = UDP + ADP. It participates in pyrimidine metabolism; CTP biosynthesis via de novo pathway; UDP from UMP (UMPK route): step 1/1. Its activity is regulated as follows. Allosterically activated by GTP. Inhibited by UTP. Catalyzes the reversible phosphorylation of UMP to UDP. In Lactobacillus acidophilus (strain ATCC 700396 / NCK56 / N2 / NCFM), this protein is Uridylate kinase.